A 622-amino-acid chain; its full sequence is Chaperone protein HscA homolog (622 aa).

The protein belongs to the heat shock protein 70 family.

Functionally, chaperone involved in the maturation of iron-sulfur cluster-containing proteins. Has a low intrinsic ATPase activity which is markedly stimulated by HscB. The chain is Chaperone protein HscA homolog from Burkholderia multivorans (strain ATCC 17616 / 249).